A 215-amino-acid polypeptide reads, in one-letter code: ATP-dependent dethiobiotin synthetase BioD (215 aa).

Residue 13–18 (DIGKTV) participates in ATP binding. Threonine 17 contributes to the Mg(2+) binding site. The active site involves lysine 38. Threonine 42 contacts substrate. Residues aspartate 50, 115–118 (EGAG), and 175–176 (NH) contribute to the ATP site. Mg(2+) is bound by residues aspartate 50 and glutamate 115.

It belongs to the dethiobiotin synthetase family. As to quaternary structure, homodimer. It depends on Mg(2+) as a cofactor.

It is found in the cytoplasm. It catalyses the reaction (7R,8S)-7,8-diammoniononanoate + CO2 + ATP = (4R,5S)-dethiobiotin + ADP + phosphate + 3 H(+). The protein operates within cofactor biosynthesis; biotin biosynthesis; biotin from 7,8-diaminononanoate: step 1/2. Functionally, catalyzes a mechanistically unusual reaction, the ATP-dependent insertion of CO2 between the N7 and N8 nitrogen atoms of 7,8-diaminopelargonic acid (DAPA, also called 7,8-diammoniononanoate) to form a ureido ring. The sequence is that of ATP-dependent dethiobiotin synthetase BioD from Neisseria meningitidis serogroup C / serotype 2a (strain ATCC 700532 / DSM 15464 / FAM18).